Here is a 662-residue protein sequence, read N- to C-terminus: Envelope glycoprotein (662 aa).

The first 34 residues, 1-34, serve as a signal peptide directing secretion; the sequence is MEGPTHPKPSKDKTFSWDLMILVGVLLRLDVGMA. The Extracellular portion of the chain corresponds to 35-606; it reads NPSPHQIYNV…FNKSPWFTTL (572 aa). 2 N-linked (GlcNAc...) asparagine; by host glycosylation sites follow: asparagine 43 and asparagine 58. Disulfide bonds link cysteine 115/cysteine 132 and cysteine 124/cysteine 137. The tract at residues 251-281 is disordered; the sequence is VLPDQKPPSRQSQIESRVTPHHSQGNGGTPG. The span at 258–274 shows a compositional bias: polar residues; sequence PSRQSQIESRVTPHHSQ. Residues asparagine 286, asparagine 322, and asparagine 327 are each glycosylated (N-linked (GlcNAc...) asparagine; by host). Intrachain disulfides connect cysteine 332–cysteine 335, cysteine 332–cysteine 559, and cysteine 551–cysteine 558. Residues 332 to 335 carry the CXXC motif; the sequence is CWLC. 3 N-linked (GlcNAc...) asparagine; by host glycosylation sites follow: asparagine 351, asparagine 354, and asparagine 430. The interval 468-488 is fusion peptide; the sequence is ISLTVALMLGGLTVGGIAAGV. Coiled coils occupy residues 496-545 and 555-591; these read LETA…ILFL and KEEC…SQQG. An immunosuppression region spans residues 534–550; sequence LQNRRGLDILFLQEGGL. The short motif at 551–559 is the CX6CC element; the sequence is CAALKEECC. The chain crosses the membrane as a helical span at residues 607–627; that stretch reads ISSIMGPLLILLLILLFGPCI. The S-palmitoyl cysteine; by host moiety is linked to residue cysteine 626. Residues 628-662 are Cytoplasmic-facing; the sequence is LNRLVQFVKDRISVVQALILTQQYQQIKQYDPDQP.

The mature envelope protein (Env) consists of a trimer of SU-TM heterodimers attached by a labile interchain disulfide bond. Specific enzymatic cleavages in vivo yield mature proteins. Envelope glycoproteins are synthesized as an inactive precursor that is N-glycosylated and processed likely by host cell furin or by a furin-like protease in the Golgi to yield the mature SU and TM proteins. The cleavage site between SU and TM requires the minimal sequence [KR]-X-[KR]-R. The R-peptide is released from the C-terminus of the cytoplasmic tail of the TM protein upon particle formation as a result of proteolytic cleavage by the viral protease. Cleavage of this peptide is required for TM to become fusogenic. Post-translationally, the CXXC motif is highly conserved across a broad range of retroviral envelope proteins. It is thought to participate in the formation of a labile disulfide bond possibly with the CX6CC motif present in the transmembrane protein. Isomerization of the intersubunit disulfide bond to an SU intrachain disulfide bond is thought to occur upon receptor recognition in order to allow membrane fusion. In terms of processing, the transmembrane protein is palmitoylated. The R-peptide is palmitoylated.

Its subcellular location is the virion membrane. It is found in the host cell membrane. Its function is as follows. The surface protein (SU) attaches the virus to the host cell by binding to its receptor. This interaction triggers the refolding of the transmembrane protein (TM) and is thought to activate its fusogenic potential by unmasking its fusion peptide. Fusion occurs at the host cell plasma membrane. The transmembrane protein (TM) acts as a class I viral fusion protein. Under the current model, the protein has at least 3 conformational states: pre-fusion native state, pre-hairpin intermediate state, and post-fusion hairpin state. During viral and target cell membrane fusion, the coiled coil regions (heptad repeats) assume a trimer-of-hairpins structure, positioning the fusion peptide in close proximity to the C-terminal region of the ectodomain. The formation of this structure appears to drive apposition and subsequent fusion of viral and target cell membranes. Membranes fusion leads to delivery of the nucleocapsid into the cytoplasm. The protein is Envelope glycoprotein (env) of Felis catus (Cat).